The chain runs to 484 residues: MIDSTSTATATSKTVELNTNGSKTDASSENGTASNYPEGLWCFDEAMKMDPETTVKLQLDHLNKLRTVHGHARNFVKADNSRFVDEKGTEHLDLIGGVGVVTVGNNNQYVWDCLQKCFDAKLYMMGAISYRNLAAAFGRNMALLSPGQKLTRTWTATGGAEANEGVIKLIRLATRYKPNKKKFLSTLNSFHGKTTGAVFLGGKEKWQKYQSPAPFDVDYVPYGDAEALQVALSSGMYRSFIVEPIQGEGGVIVPPPGYLAKARELCTKYDTYLVLDEIQTGCGRTGKFWACEYENIIPDCIAFAKGFSGGLIPFAGYIATEELWNAAYNSLETAFLHTATYQENTLGLAAGVATIDYIVQNDLLSRCRKLGGIMFDRLNKLQTKFPHVMKDVRGRGMIVGIEFYPIPESVQEEFGEYYATPIVNDLADTYHVQVYCSLNNPSVFRFLPPLTIPEADLDEGLSAVESAVAKFDAKVKEAVAAKST.

The span at 1 to 14 (MIDSTSTATATSKT) shows a compositional bias: low complexity. The tract at residues 1–32 (MIDSTSTATATSKTVELNTNGSKTDASSENGT) is disordered. Residues 15-32 (VELNTNGSKTDASSENGT) show a composition bias toward polar residues. N6-(pyridoxal phosphate)lysine is present on lysine 305.

It belongs to the class-III pyridoxal-phosphate-dependent aminotransferase family. Pyridoxal 5'-phosphate is required as a cofactor.

This is an uncharacterized protein from Schizosaccharomyces pombe (strain 972 / ATCC 24843) (Fission yeast).